A 131-amino-acid chain; its full sequence is Large ribosomal subunit protein bL19 (131 aa).

The protein belongs to the bacterial ribosomal protein bL19 family.

This protein is located at the 30S-50S ribosomal subunit interface and may play a role in the structure and function of the aminoacyl-tRNA binding site. The polypeptide is Large ribosomal subunit protein bL19 (Anaeromyxobacter dehalogenans (strain 2CP-C)).